A 346-amino-acid chain; its full sequence is Protein FAF1 (346 aa).

2 disordered regions span residues 22-120 (QFGS…LRSG) and 323-346 (KRDIARISGGERSGKFNGKKKSRR). The span at 31 to 65 (FEDKTKNIRTEVDTRDSSGDEIDNSDHGSDFKDGT) shows a compositional bias: basic and acidic residues. The segment covering 72–85 (SDEDSGNETAEENN) has biased composition (acidic residues).

As to quaternary structure, interacts with KRR1.

It is found in the nucleus. The protein resides in the nucleolus. Its function is as follows. Required for pre-rRNA processing and 40S ribosomal subunit assembly. Seems to act in the processing of 35S rRNA at the A(0), A(1), and A(2) cleavage sites. This chain is Protein FAF1 (FAF1), found in Saccharomyces cerevisiae (strain ATCC 204508 / S288c) (Baker's yeast).